Reading from the N-terminus, the 398-residue chain is 2,3-bisphosphoglycerate-independent phosphoglycerate mutase (398 aa).

It belongs to the BPG-independent phosphoglycerate mutase family. A-PGAM subfamily.

It catalyses the reaction (2R)-2-phosphoglycerate = (2R)-3-phosphoglycerate. It functions in the pathway carbohydrate degradation; glycolysis; pyruvate from D-glyceraldehyde 3-phosphate: step 3/5. Functionally, catalyzes the interconversion of 2-phosphoglycerate and 3-phosphoglycerate. The polypeptide is 2,3-bisphosphoglycerate-independent phosphoglycerate mutase (Methanosarcina barkeri (strain Fusaro / DSM 804)).